The sequence spans 131 residues: Protein ApaG (131 aa).

One can recognise an ApaG domain in the interval 3 to 127; the sequence is RAVTRQIEVT…FSLDSPDGGK (125 aa).

This is Protein ApaG from Bradyrhizobium sp. (strain BTAi1 / ATCC BAA-1182).